We begin with the raw amino-acid sequence, 123 residues long: MRWLTPFGMLFISGTYYGLIFFGLIMEVIHNALISLVLAFFVVFAWDLVLSLIYGLRFVKEGDYIALDWDGQFPDCYGLFASTCLSAVIWTYTDSLLLGLIVPVIIVFLGKQLMRGLYEKIKS.

This is an uncharacterized protein from Methanocaldococcus jannaschii (strain ATCC 43067 / DSM 2661 / JAL-1 / JCM 10045 / NBRC 100440) (Methanococcus jannaschii).